Reading from the N-terminus, the 169-residue chain is NADH-quinone oxidoreductase subunit I (169 aa).

4Fe-4S ferredoxin-type domains lie at arginine 61–glutamate 90 and threonine 100–isoleucine 129. [4Fe-4S] cluster-binding residues include cysteine 70, cysteine 73, cysteine 76, cysteine 80, cysteine 109, cysteine 112, cysteine 115, and cysteine 119.

This sequence belongs to the complex I 23 kDa subunit family. NDH-1 is composed of 14 different subunits. Subunits NuoA, H, J, K, L, M, N constitute the membrane sector of the complex. The cofactor is [4Fe-4S] cluster.

The protein resides in the cell inner membrane. It carries out the reaction a quinone + NADH + 5 H(+)(in) = a quinol + NAD(+) + 4 H(+)(out). NDH-1 shuttles electrons from NADH, via FMN and iron-sulfur (Fe-S) centers, to quinones in the respiratory chain. The immediate electron acceptor for the enzyme in this species is believed to be ubiquinone. Couples the redox reaction to proton translocation (for every two electrons transferred, four hydrogen ions are translocated across the cytoplasmic membrane), and thus conserves the redox energy in a proton gradient. In Verminephrobacter eiseniae (strain EF01-2), this protein is NADH-quinone oxidoreductase subunit I.